A 130-amino-acid chain; its full sequence is Small ribosomal subunit protein uS8 (130 aa).

This sequence belongs to the universal ribosomal protein uS8 family.

In Eremothecium gossypii (strain ATCC 10895 / CBS 109.51 / FGSC 9923 / NRRL Y-1056) (Yeast), this protein is Small ribosomal subunit protein uS8 (RPS22A).